The following is a 1273-amino-acid chain: Receptor-type tyrosine-protein phosphatase C (1273 aa).

Residues 1-23 (MYLWLKLLAFSLALLGPEVFVTG) form the signal peptide. Residues 24–546 (QGTTDDGLDT…KPQSTSYNSK (523 aa)) are Extracellular-facing. The tract at residues 45 to 192 (LPARTTEFTP…TEIATPQTKP (148 aa)) is disordered. Composition is skewed to polar residues over residues 50–77 (TEFT…SSTL), 84–111 (QPDS…TLTA), and 141–192 (RNST…QTKP). Asparagine 62 carries N-linked (GlcNAc...) asparagine glycosylation. N-linked (GlcNAc...) asparagine glycosylation is found at asparagine 142, asparagine 153, asparagine 164, asparagine 178, asparagine 200, asparagine 245, asparagine 250, asparagine 271, asparagine 282, asparagine 327, asparagine 333, asparagine 371, asparagine 374, asparagine 471, and asparagine 502. Fibronectin type-III domains follow at residues 361 to 452 (PEML…TKAA) and 453 to 545 (RPGK…SYNS). A helical transmembrane segment spans residues 547–567 (ALIIFLVFLIIVTSIALLVVL). Over 568-1273 (YKIYDLRKKR…PMSPALTPSS (706 aa)) the chain is Cytoplasmic. Tyrosine-protein phosphatase domains lie at 622–881 (FLAE…LVEY) and 913–1196 (LEAE…MASI). Tyrosine 652 carries the phosphotyrosine modification. Residues aspartate 790, 822–828 (CSAGVGR), and glutamine 866 each bind substrate. The active-site Phosphocysteine intermediate is the cysteine 822. Phosphoserine occurs at positions 944, 963, 966, 970, 973, 974, and 978. Residues 960–984 (LEMSKESEAESDESSDEDSDSEETS) are disordered. Positions 968-981 (AESDESSDEDSDSE) are enriched in acidic residues. The Phosphocysteine intermediate role is filled by cysteine 1137. Phosphoserine occurs at positions 1209 and 1266. The segment at 1219–1273 (VDGAKQDANCVQPADPLNKAQEDSKEVGASEPASGSEEPEHSANGPMSPALTPSS) is disordered.

It belongs to the protein-tyrosine phosphatase family. Receptor class 1/6 subfamily. As to quaternary structure, interacts with SKAP1. Interacts with DPP4; the interaction is enhanced in an interleukin-12-dependent manner in activated lymphocytes. Binds GANAB and PRKCSH. Interacts with CD53; this interaction stabilizes PTPRC on the membrane and is required for optimal phosphatase activity. Interacts with CLEC10A. Heavily N- and O-glycosylated. In terms of processing, the cytoplasmic domain contains potential phosphorylation sites. In terms of tissue distribution, isoform 1 and isoform 2 are found in thymocyte and lymph node. Isoform 4 and isoform 3 are found in the lymph nod.

The protein localises to the cell membrane. The protein resides in the membrane raft. It localises to the synapse. The catalysed reaction is O-phospho-L-tyrosyl-[protein] + H2O = L-tyrosyl-[protein] + phosphate. Functionally, protein tyrosine-protein phosphatase required for T-cell activation through the antigen receptor. Acts as a positive regulator of T-cell coactivation upon binding to DPP4. The first PTPase domain has enzymatic activity, while the second one seems to affect the substrate specificity of the first one. Upon T-cell activation, recruits and dephosphorylates SKAP1 and FYN. Dephosphorylates LYN, and thereby modulates LYN activity. Interacts with CLEC10A at antigen presenting cell-T cell contact; CLEC10A on immature dendritic cells recognizes Tn antigen-carrying PTPRC/CD45 receptor on effector T cells and modulates T cell activation threshold to limit autoreactivity. This chain is Receptor-type tyrosine-protein phosphatase C (Ptprc), found in Rattus norvegicus (Rat).